The primary structure comprises 132 residues: ATP synthase epsilon chain (132 aa).

This sequence belongs to the ATPase epsilon chain family. F-type ATPases have 2 components, CF(1) - the catalytic core - and CF(0) - the membrane proton channel. CF(1) has five subunits: alpha(3), beta(3), gamma(1), delta(1), epsilon(1). CF(0) has three main subunits: a, b and c.

The protein resides in the cell membrane. Its function is as follows. Produces ATP from ADP in the presence of a proton gradient across the membrane. The sequence is that of ATP synthase epsilon chain from Brevibacillus brevis (strain 47 / JCM 6285 / NBRC 100599).